We begin with the raw amino-acid sequence, 311 residues long: Dermonecrotic toxin (311 aa).

The N-terminal stretch at 1 to 21 is a signal peptide; the sequence is MYVHLALILGCWTVVLQGAET. The propeptide occupies 22–26; sequence DVGER. His-38 is a catalytic residue. 2 residues coordinate Mg(2+): Glu-58 and Asp-60. The Nucleophile role is filled by His-73. A disulfide bond links Cys-77 and Cys-83. Asp-117 is a binding site for Mg(2+).

Belongs to the arthropod phospholipase D family. Class I subfamily. Requires Mg(2+) as cofactor. Expressed by the venom gland.

The protein localises to the secreted. The enzyme catalyses an N-(acyl)-sphingosylphosphocholine = an N-(acyl)-sphingosyl-1,3-cyclic phosphate + choline. It carries out the reaction an N-(acyl)-sphingosylphosphoethanolamine = an N-(acyl)-sphingosyl-1,3-cyclic phosphate + ethanolamine. It catalyses the reaction a 1-acyl-sn-glycero-3-phosphocholine = a 1-acyl-sn-glycero-2,3-cyclic phosphate + choline. The catalysed reaction is a 1-acyl-sn-glycero-3-phosphoethanolamine = a 1-acyl-sn-glycero-2,3-cyclic phosphate + ethanolamine. Its activity is regulated as follows. Catalytic activity and hemolysis are inhibited by divalent ion chelators (1,10-phenanthroline, EDTA, and EGTA). Dermonecrotic toxins cleave the phosphodiester linkage between the phosphate and headgroup of certain phospholipids (sphingolipid and lysolipid substrates), forming an alcohol (often choline) and a cyclic phosphate. This toxin acts on sphingomyelin (SM). It may also act on ceramide phosphoethanolamine (CPE), lysophosphatidylcholine (LPC) and lysophosphatidylethanolamine (LPE), but not on lysophosphatidylserine (LPS), and lysophosphatidylglycerol (LPG). It acts by transphosphatidylation, releasing exclusively cyclic phosphate products as second products. Shows complement-dependent hemolysis. Also induces dermonecrosis, vascular permeability, edema, inflammatory response, and platelet aggregation. The polypeptide is Dermonecrotic toxin (Loxosceles laeta (South American recluse spider)).